We begin with the raw amino-acid sequence, 241 residues long: Small ribosomal subunit protein uS5 (241 aa).

The tract at residues 1-53 (MSDNEKETQVAEETQNTQAAAESNNEDRKSRRGQRGEGRRGERRNRREESHEN) is disordered. A compositionally biased stretch (low complexity) spans 11–22 (AEETQNTQAAAE). Over residues 25–53 (NEDRKSRRGQRGEGRRGERRNRREESHEN) the composition is skewed to basic and acidic residues. Positions 55–118 (MLDRVVTINR…LDAKKHMFTV (64 aa)) constitute an S5 DRBM domain.

Belongs to the universal ribosomal protein uS5 family. In terms of assembly, part of the 30S ribosomal subunit. Contacts proteins S4 and S8.

With S4 and S12 plays an important role in translational accuracy. Its function is as follows. Located at the back of the 30S subunit body where it stabilizes the conformation of the head with respect to the body. This Bifidobacterium adolescentis (strain ATCC 15703 / DSM 20083 / NCTC 11814 / E194a) protein is Small ribosomal subunit protein uS5.